A 431-amino-acid chain; its full sequence is Tyrosine--tRNA ligase (431 aa).

Y33 serves as a coordination point for L-tyrosine. The short motif at 38 to 47 is the 'HIGH' region element; sequence PTADSLHIGS. Y172 and Q176 together coordinate L-tyrosine. A 'KMSKS' region motif is present at residues 234–238; the sequence is KFGKS. Residue K237 coordinates ATP. The region spanning 364–431 is the S4 RNA-binding domain; it reads LDIVTVLNEK…KKNYFVIRVV (68 aa).

The protein belongs to the class-I aminoacyl-tRNA synthetase family. TyrS type 1 subfamily. In terms of assembly, homodimer.

It is found in the cytoplasm. It carries out the reaction tRNA(Tyr) + L-tyrosine + ATP = L-tyrosyl-tRNA(Tyr) + AMP + diphosphate + H(+). In terms of biological role, catalyzes the attachment of tyrosine to tRNA(Tyr) in a two-step reaction: tyrosine is first activated by ATP to form Tyr-AMP and then transferred to the acceptor end of tRNA(Tyr). In Flavobacterium johnsoniae (strain ATCC 17061 / DSM 2064 / JCM 8514 / BCRC 14874 / CCUG 350202 / NBRC 14942 / NCIMB 11054 / UW101) (Cytophaga johnsonae), this protein is Tyrosine--tRNA ligase.